A 338-amino-acid chain; its full sequence is UDP-N-acetylglucosamine--N-acetylmuramyl-(pentapeptide) pyrophosphoryl-undecaprenol N-acetylglucosamine transferase (338 aa).

Residues 10 to 12 (TGG), Asn-122, Ser-177, and Gln-275 each bind UDP-N-acetyl-alpha-D-glucosamine.

It belongs to the glycosyltransferase 28 family. MurG subfamily.

The protein resides in the cell inner membrane. It carries out the reaction di-trans,octa-cis-undecaprenyl diphospho-N-acetyl-alpha-D-muramoyl-L-alanyl-D-glutamyl-meso-2,6-diaminopimeloyl-D-alanyl-D-alanine + UDP-N-acetyl-alpha-D-glucosamine = di-trans,octa-cis-undecaprenyl diphospho-[N-acetyl-alpha-D-glucosaminyl-(1-&gt;4)]-N-acetyl-alpha-D-muramoyl-L-alanyl-D-glutamyl-meso-2,6-diaminopimeloyl-D-alanyl-D-alanine + UDP + H(+). Its pathway is cell wall biogenesis; peptidoglycan biosynthesis. In terms of biological role, cell wall formation. Catalyzes the transfer of a GlcNAc subunit on undecaprenyl-pyrophosphoryl-MurNAc-pentapeptide (lipid intermediate I) to form undecaprenyl-pyrophosphoryl-MurNAc-(pentapeptide)GlcNAc (lipid intermediate II). The polypeptide is UDP-N-acetylglucosamine--N-acetylmuramyl-(pentapeptide) pyrophosphoryl-undecaprenol N-acetylglucosamine transferase (Sulfurovum sp. (strain NBC37-1)).